Consider the following 300-residue polypeptide: Cytochrome b (300 aa).

The next 6 membrane-spanning stretches (helical) occupy residues 28 to 48, 72 to 94, 107 to 127, 168 to 187, 223 to 243, and 279 to 299; these read YGFL…LLAL, WCFR…LHIL, SWIS…YGYV, FFVF…FGIL, IPNK…LFLL, and IGCQ…YIIL. His78 and His92 together coordinate heme b.

It belongs to the cytochrome b family. In terms of assembly, the main subunits of complex b-c1 are: cytochrome b, cytochrome c1 and the Rieske protein. The cofactor is heme b.

Its subcellular location is the mitochondrion inner membrane. Functionally, component of the ubiquinol-cytochrome c reductase complex (complex III or cytochrome b-c1 complex) that is part of the mitochondrial respiratory chain. The b-c1 complex mediates electron transfer from ubiquinol to cytochrome c. Contributes to the generation of a proton gradient across the mitochondrial membrane that is then used for ATP synthesis. In Plasmodium gallinaceum, this protein is Cytochrome b (MT-CYB).